The chain runs to 150 residues: Urease accessory protein UreE (150 aa).

It belongs to the UreE family.

The protein localises to the cytoplasm. Involved in urease metallocenter assembly. Binds nickel. Probably functions as a nickel donor during metallocenter assembly. The protein is Urease accessory protein UreE of Staphylococcus aureus (strain Mu3 / ATCC 700698).